A 420-amino-acid polypeptide reads, in one-letter code: uncharacterized protein (420 aa).

Residues 7–65 (NIERGSVINVEILNAAHGGQGIAKYDGRVIFVKGAFPGDRLSANITHVKKKFARATIAS) form the TRAM domain. 4 residues coordinate S-adenosyl-L-methionine: Q245, Y280, E304, and D349. C376 (nucleophile) is an active-site residue.

This sequence belongs to the class I-like SAM-binding methyltransferase superfamily. RNA M5U methyltransferase family.

This is an uncharacterized protein from Corynebacterium diphtheriae (strain ATCC 700971 / NCTC 13129 / Biotype gravis).